Consider the following 405-residue polypeptide: NADH-quinone oxidoreductase subunit D (405 aa).

It belongs to the complex I 49 kDa subunit family. As to quaternary structure, NDH-1 is composed of 14 different subunits. Subunits NuoB, C, D, E, F, and G constitute the peripheral sector of the complex.

The protein resides in the cell inner membrane. The enzyme catalyses a quinone + NADH + 5 H(+)(in) = a quinol + NAD(+) + 4 H(+)(out). In terms of biological role, NDH-1 shuttles electrons from NADH, via FMN and iron-sulfur (Fe-S) centers, to quinones in the respiratory chain. The immediate electron acceptor for the enzyme in this species is believed to be ubiquinone. Couples the redox reaction to proton translocation (for every two electrons transferred, four hydrogen ions are translocated across the cytoplasmic membrane), and thus conserves the redox energy in a proton gradient. The polypeptide is NADH-quinone oxidoreductase subunit D (Leptospira interrogans serogroup Icterohaemorrhagiae serovar copenhageni (strain Fiocruz L1-130)).